We begin with the raw amino-acid sequence, 858 residues long: Ubiquitin carboxyl-terminal hydrolase 5 (858 aa).

Ala-2 is subject to N-acetylalanine. A disordered region spans residues 73-98; the sequence is LRRTRRPKEEDTSAGTGDPPRKKPTR. A Glycyl lysine isopeptide (Lys-Gly) (interchain with G-Cter in SUMO) cross-link involves residue Lys-113. Phosphoserine is present on residues Ser-149 and Ser-156. The UBP-type; degenerate zinc finger occupies 175-283; the sequence is QVSKHAFNLK…EHLSHFGIDM (109 aa). Cysteines 195 and 816 form a disulfide. Zn(2+)-binding residues include Cys-199 and Cys-202. Residue Trp-209 participates in substrate binding. Cys-219 is a binding site for Zn(2+). Residue 221–224 coordinates substrate; that stretch reads RRYF. His-232 is a binding site for Zn(2+). 3 residues coordinate substrate: Tyr-259, Tyr-261, and Asp-264. The residue at position 292 (Thr-292) is a Phosphothreonine. In terms of domain architecture, USP spans 326-856; that stretch reads TGIRNLGNSC…LGYIYFYQRV (531 aa). Catalysis depends on Cys-335, which acts as the Nucleophile. Thr-623 carries the post-translational modification Phosphothreonine. 2 consecutive UBA domains span residues 654–695 and 722–762; these read MLDE…VMSH and PPPE…IFSH. 3 positions are modified to phosphoserine: Ser-779, Ser-783, and Ser-785. His-818 acts as the Proton acceptor in catalysis.

It belongs to the peptidase C19 family. As to quaternary structure, homodimer. Interacts with TRIML1. SUMOylated at Lys-113; SUMOylation affects the interaction with Cav3.2 channels. Post-translationally, ubiquitinated by SMURF1; leading to proteasomal degradation.

Its subcellular location is the cytoplasm. The protein resides in the stress granule. It localises to the nucleus. It catalyses the reaction Thiol-dependent hydrolysis of ester, thioester, amide, peptide and isopeptide bonds formed by the C-terminal Gly of ubiquitin (a 76-residue protein attached to proteins as an intracellular targeting signal).. In terms of biological role, deubiquitinating enzyme that participates in a wide range of cellular processes by specifically cleaving isopeptide bonds between ubiquitin and substrate proteins or ubiquitin itself. Affects thereby important cellular signaling pathways such as NF-kappa-B, Wnt/beta-catenin, and cytokine production by regulating ubiquitin-dependent protein degradation. Participates in the activation of the Wnt signaling pathway by promoting FOXM1 deubiquitination and stabilization that induces the recruitment of beta-catenin to Wnt target gene promoter. Regulates the assembly and disassembly of heat-induced stress granules by mediating the hydrolysis of unanchored ubiquitin chains. Promotes lipopolysaccharide-induced apoptosis and inflammatory response by stabilizing the TXNIP protein. Affects T-cell biology by stabilizing the inhibitory receptor on T-cells PDC1. Acts as a negative regulator of autophagy by regulating ULK1 at both protein and mRNA levels. Acts also as a negative regulator of type I interferon production by simultaneously removing both 'Lys-48'-linked unanchored and 'Lys-63'-linked anchored polyubiquitin chains on the transcription factor IRF3. Modulates the stability of DNA mismatch repair protein MLH1 and counteracts the effect of the ubiquitin ligase UBR4. Upon activation by insulin, it gets phosphorylated through mTORC1-mediated phosphorylation to enhance YTHDF1 stability by removing 'Lys-11'-linked polyubiquitination. May also deubiquitinate other substrates such as the calcium channel CACNA1H. In Mus musculus (Mouse), this protein is Ubiquitin carboxyl-terminal hydrolase 5 (Usp5).